The sequence spans 181 residues: dCTP deaminase (181 aa).

DCTP is bound by residues 100-105 (RSTFAR) and Asp116. Glu126 (proton donor/acceptor) is an active-site residue. DCTP-binding residues include Tyr158 and Gln165. Positions 160-181 (GKYQGQRGVTPPKLDNSSSKNF) are disordered.

It belongs to the dCTP deaminase family. As to quaternary structure, homotrimer.

The enzyme catalyses dCTP + H2O + H(+) = dUTP + NH4(+). The protein operates within pyrimidine metabolism; dUMP biosynthesis; dUMP from dCTP (dUTP route): step 1/2. Its function is as follows. Catalyzes the deamination of dCTP to dUTP. This Desulfurococcus amylolyticus (strain DSM 18924 / JCM 16383 / VKM B-2413 / 1221n) (Desulfurococcus kamchatkensis) protein is dCTP deaminase.